The sequence spans 118 residues: ATP synthase subunit g, mitochondrial (118 aa).

F-type ATP synthases have 2 components, the catalytic core F(1) and the membrane-embedded component F(0), linked together by a central stalk and a peripheral stalk. The central stalk, also called rotor shaft, is often seen as part of F(1). The peripheral stalk is seen as part of F(0). F(0) contains the membrane channel next to the rotor. F-type ATP synthases form dimers but each monomer functions independently in ATP generation. The dimer consists of 18 different polypeptides: ATP1 (subunit alpha, part of F(1), 3 molecules per monomer), ATP2 (subunit beta, part of F(1), 3 molecules per monomer), ATP3 (subunit gamma, part of the central stalk), ATP4 (subunit b, part of the peripheral stalk), ATP5/OSCP (subunit 5/OSCP, part of the peripheral stalk), ATP6 (subunit a, part of the peripheral stalk), ATP7 (subunit d, part of the peripheral stalk), ATP8 (subunit 8, part of the peripheral stalk), OLI1 (subunit c, part of the rotor, 10 molecules per monomer), ATP14 (subunit h, part of the peripheral stalk), ATP15 (subunit epsilon, part of the central stalk), ATP16 (subunit delta, part of the central stalk), ATP17 (subunit f, part of the peripheral stalk), ATP18 (subunit i/j, part of the peripheral stalk). Dimer-specific subunits are ATP19 (subunit k, at interface between monomers), ATP20 (subunit g, at interface between monomers), TIM11 (subunit e, at interface between monomers). Also contains subunit L.

The protein resides in the mitochondrion inner membrane. Functionally, mitochondrial membrane ATP synthase (F(1)F(0) ATP synthase or Complex V) produces ATP from ADP in the presence of a proton gradient across the membrane which is generated by electron transport complexes of the respiratory chain. F-type ATP synthases consist of two structural domains, F(1) - containing the extramembraneous catalytic core, and F(0) - containing the membrane proton channel, linked together by a central stalk and a peripheral stalk. During catalysis, ATP synthesis in the catalytic domain of F(1) is coupled via a rotary mechanism of the central stalk subunits to proton translocation. Part of the complex F(0) domain Minor subunit located with subunit a/ATP6 in the membrane. Together with subunit e/TIM11, probably contributes to membrane curvature at the site of the ATP synthase dimer, ultimately contributing to formation of cristae. The chain is ATP synthase subunit g, mitochondrial from Pichia angusta (Yeast).